The chain runs to 305 residues: 4-diphosphocytidyl-2-C-methyl-D-erythritol kinase (305 aa).

Lysine 15 is an active-site residue. Residue 99–109 (PMGGGIGGGSS) coordinates ATP. Aspartate 141 is an active-site residue.

Belongs to the GHMP kinase family. IspE subfamily.

The enzyme catalyses 4-CDP-2-C-methyl-D-erythritol + ATP = 4-CDP-2-C-methyl-D-erythritol 2-phosphate + ADP + H(+). Its pathway is isoprenoid biosynthesis; isopentenyl diphosphate biosynthesis via DXP pathway; isopentenyl diphosphate from 1-deoxy-D-xylulose 5-phosphate: step 3/6. In terms of biological role, catalyzes the phosphorylation of the position 2 hydroxy group of 4-diphosphocytidyl-2C-methyl-D-erythritol. This Marinomonas sp. (strain MWYL1) protein is 4-diphosphocytidyl-2-C-methyl-D-erythritol kinase.